The primary structure comprises 297 residues: N-acetylmuramic acid 6-phosphate etherase (297 aa).

The region spanning 56 to 219 (AIEAFNKGGR…STISMIGIGK (164 aa)) is the SIS domain. Residue E84 is the Proton donor of the active site. E115 is an active-site residue.

It belongs to the GCKR-like family. MurNAc-6-P etherase subfamily. In terms of assembly, homodimer.

It catalyses the reaction N-acetyl-D-muramate 6-phosphate + H2O = N-acetyl-D-glucosamine 6-phosphate + (R)-lactate. It participates in amino-sugar metabolism; N-acetylmuramate degradation. Specifically catalyzes the cleavage of the D-lactyl ether substituent of MurNAc 6-phosphate, producing GlcNAc 6-phosphate and D-lactate. This chain is N-acetylmuramic acid 6-phosphate etherase, found in Lactococcus lactis subsp. lactis (strain IL1403) (Streptococcus lactis).